A 156-amino-acid polypeptide reads, in one-letter code: Large ribosomal subunit protein uL13 (156 aa).

Belongs to the universal ribosomal protein uL13 family. Part of the 50S ribosomal subunit.

This protein is one of the early assembly proteins of the 50S ribosomal subunit, although it is not seen to bind rRNA by itself. It is important during the early stages of 50S assembly. In Archaeoglobus fulgidus (strain ATCC 49558 / DSM 4304 / JCM 9628 / NBRC 100126 / VC-16), this protein is Large ribosomal subunit protein uL13.